Consider the following 118-residue polypeptide: Putative pterin-4-alpha-carbinolamine dehydratase (118 aa).

Belongs to the pterin-4-alpha-carbinolamine dehydratase family.

It catalyses the reaction (4aS,6R)-4a-hydroxy-L-erythro-5,6,7,8-tetrahydrobiopterin = (6R)-L-erythro-6,7-dihydrobiopterin + H2O. This Pseudomonas putida (strain ATCC 700007 / DSM 6899 / JCM 31910 / BCRC 17059 / LMG 24140 / F1) protein is Putative pterin-4-alpha-carbinolamine dehydratase.